A 96-amino-acid polypeptide reads, in one-letter code: MEQAPEDQGPPREPYQEWALETLEELKNEAVRHFPRPWLHQLGQFIYDTYGDTWVGVEAIIRILQHLLFIHFRLGCQHSRIGILPQRRRSNGSNRS.

The homooligomerization stretch occupies residues 1 to 42 (MEQAPEDQGPPREPYQEWALETLEELKNEAVRHFPRPWLHQL). Ser79 and Ser96 each carry phosphoserine; by host.

It belongs to the HIV-1 VPR protein family. In terms of assembly, homooligomer, may form homodimer. Interacts with p6-gag region of the Pr55 Gag precursor protein through a (Leu-X-X)4 motif near the C-terminus of the P6gag protein. Interacts with host UNG. May interact with host RAD23A/HHR23A. Interacts with host VPRBP/DCAF1, leading to hijack the CUL4A-RBX1-DDB1-DCAF1/VPRBP complex, mediating ubiquitination of host proteins such as TERT and ZGPAT and arrest of the cell cycle in G2 phase. Phosphorylated on several residues by host. These phosphorylations regulate VPR activity for the nuclear import of the HIV-1 pre-integration complex.

Its subcellular location is the virion. The protein localises to the host nucleus. It is found in the host extracellular space. In terms of biological role, during virus replication, may deplete host UNG protein, and incude G2-M cell cycle arrest. Acts by targeting specific host proteins for degradation by the 26S proteasome, through association with the cellular CUL4A-DDB1 E3 ligase complex by direct interaction with host VPRPB/DCAF-1. Cell cycle arrest reportedly occurs within hours of infection and is not blocked by antiviral agents, suggesting that it is initiated by the VPR carried into the virion. Additionally, VPR induces apoptosis in a cell cycle dependent manner suggesting that these two effects are mechanistically linked. Detected in the serum and cerebrospinal fluid of AIDS patient, VPR may also induce cell death to bystander cells. Functionally, during virus entry, plays a role in the transport of the viral pre-integration (PIC) complex to the host nucleus. This function is crucial for viral infection of non-dividing macrophages. May act directly at the nuclear pore complex, by binding nucleoporins phenylalanine-glycine (FG)-repeat regions. This Pan (chimpanzees) protein is Protein Vpr.